Consider the following 267-residue polypeptide: Undecaprenyl-diphosphatase (267 aa).

The next 8 helical transmembrane spans lie at 1-21 (MSYFEAFMLALVQGFTEFLPI), 39-59 (QGLAFDVAVHVGTLAAVVIYF), 83-103 (AKLAWMIILATIPACIFGLLM), 111-131 (LRSAWVIATTTIIFGLLLWWV), 144-164 (AGWKKALFIGLAQAMAIIPGT), 189-209 (FLMSIPIITLAGGYLGLKLVT), 218-238 (TLLTGIVVSFISAYICIHFFL), and 246-266 (MTPFVIYRLILGFGLFAFLMM).

This sequence belongs to the UppP family.

It localises to the cell inner membrane. It catalyses the reaction di-trans,octa-cis-undecaprenyl diphosphate + H2O = di-trans,octa-cis-undecaprenyl phosphate + phosphate + H(+). Its function is as follows. Catalyzes the dephosphorylation of undecaprenyl diphosphate (UPP). Confers resistance to bacitracin. The sequence is that of Undecaprenyl-diphosphatase from Vibrio atlanticus (strain LGP32) (Vibrio splendidus (strain Mel32)).